We begin with the raw amino-acid sequence, 342 residues long: MRSTKTIHVISAHAEGEVGDVIVGGVAPPPGDTIWEQSRWIAREQTLRNFVLNEPRGGVFRHVNLLVPPKHPDADAAFIIMEPEDTPPMSGSNSICVSTVLLDSGILPMKEPVTEITLEAPGGLVRVRAECRDGKAERIFVENLPSFAERLDAKLEVEGLGTLTVDTAYGGDSFVIVDAAAMGFALKPDEAHDIARLGVRITNAANAKLGFHHPENPDWRHFSFCLFAGPVERTAEGLRAGAAVAIQPGKVDRSPTGTALSARMAVLHARGQMGLSDRLTAVSLIGSTFSGRILGTTEVGGRPAVLPEISGRAWITGTHQHMLDPSDPWPEGYRLTDTWGAR.

Ser-90 (proton acceptor) is an active-site residue. Substrate is bound by residues 91–92 (GS), Asp-252, and 257–258 (GT).

This sequence belongs to the proline racemase family.

The enzyme catalyses trans-3-hydroxy-L-proline = 1-pyrroline-2-carboxylate + H2O. Catalyzes the dehydration of trans-3-hydroxy-L-proline (t3LHyp) to Delta(1)-pyrroline-2-carboxylate (Pyr2C). Can also catalyze the epimerization of trans-4-hydroxy-L-proline (t4LHyp) to cis-4-hydroxy-D-proline (c4DHyp), albeit with 150-fold lower efficiency. May be involved in the degradation pathway that converts t3LHyp to L-proline, which would allow R.meliloti to grow on t3LHyp as a sole carbon source. Displays no proline racemase activity. This Rhizobium meliloti (strain 1021) (Ensifer meliloti) protein is Trans-3-hydroxy-L-proline dehydratase.